The following is a 486-amino-acid chain: MREKLIFDLSRNGRKGYSLSKNDLPETSVAAVIPSKFLRTTPAELPEVPESEVVRHFIRLSNLNYHVDKNMYPLGSCTMKYNPKVNDYTCDLPGFSTLHPLQPSETTQGALRLMYELSSMLSEIAGMAAVSLQPAAGAHGELTGILLIKKYHEAQGKMRNKLLVVDSAHGTNPASAAIAGYEIISVRSNADGRTDLEDLKARLQSDVAALMLTNPNTIGLFEKDILAIERMVHENGSLLYMDGANMNALLGITRPGDMGFDVVHYNLHKTFSAPHGGGGPGSGPIGVSARLAGYLPVPVIEKEESATGTSYRLNYDRPESIGRMISFYGNFSVLVRAYTYIRMLGPEGLRRVSENAIINANYLLSLLLERYDLPYPKSVMHEFCLSGDRQKKANGVKTLDMAKRLLDYGFHAPTIYFPLIVSEALMIEPTETETKETLERFAEAMIAIADEAENNPALVKSAPETTPVKRLDEAQASRQLNICCSL.

Position 269 is an N6-(pyridoxal phosphate)lysine (Lys-269).

Belongs to the GcvP family. C-terminal subunit subfamily. The glycine cleavage system is composed of four proteins: P, T, L and H. In this organism, the P 'protein' is a heterodimer of two subunits. It depends on pyridoxal 5'-phosphate as a cofactor.

It catalyses the reaction N(6)-[(R)-lipoyl]-L-lysyl-[glycine-cleavage complex H protein] + glycine + H(+) = N(6)-[(R)-S(8)-aminomethyldihydrolipoyl]-L-lysyl-[glycine-cleavage complex H protein] + CO2. The glycine cleavage system catalyzes the degradation of glycine. The P protein binds the alpha-amino group of glycine through its pyridoxal phosphate cofactor; CO(2) is released and the remaining methylamine moiety is then transferred to the lipoamide cofactor of the H protein. In Chlorobium phaeobacteroides (strain DSM 266 / SMG 266 / 2430), this protein is Probable glycine dehydrogenase (decarboxylating) subunit 2.